The primary structure comprises 428 residues: Histidine--tRNA ligase (428 aa).

Belongs to the class-II aminoacyl-tRNA synthetase family. In terms of assembly, homodimer.

The protein resides in the cytoplasm. The enzyme catalyses tRNA(His) + L-histidine + ATP = L-histidyl-tRNA(His) + AMP + diphosphate + H(+). The chain is Histidine--tRNA ligase from Staphylococcus carnosus (strain TM300).